Here is a 439-residue protein sequence, read N- to C-terminus: Histidine--tRNA ligase (439 aa).

It belongs to the class-II aminoacyl-tRNA synthetase family. Homodimer.

The protein localises to the cytoplasm. The catalysed reaction is tRNA(His) + L-histidine + ATP = L-histidyl-tRNA(His) + AMP + diphosphate + H(+). This chain is Histidine--tRNA ligase (hisS), found in Leptospira interrogans serogroup Icterohaemorrhagiae serovar Lai (strain 56601).